The primary structure comprises 143 residues: Peptide methionine sulfoxide reductase MsrB (143 aa).

A MsrB domain is found at 16–139; the sequence is DAELRRRLTP…NSAALNFESR (124 aa). Residues C55, C58, C104, and C107 each coordinate Zn(2+). Catalysis depends on C128, which acts as the Nucleophile.

It belongs to the MsrB Met sulfoxide reductase family. Zn(2+) serves as cofactor.

The enzyme catalyses L-methionyl-[protein] + [thioredoxin]-disulfide + H2O = L-methionyl-(R)-S-oxide-[protein] + [thioredoxin]-dithiol. The sequence is that of Peptide methionine sulfoxide reductase MsrB from Burkholderia vietnamiensis (strain G4 / LMG 22486) (Burkholderia cepacia (strain R1808)).